A 114-amino-acid polypeptide reads, in one-letter code: MENAFKSHLQFTEKAIKKIKNLIEIEKNHDLKLRIYINGGGCSGFQYQFIFDTSINEDDIIITQSEVSLIIDPISLQYLYGGQIDYLENLEGSKFIVSNPNAKNTCGCGSSFSI.

Residues cysteine 42, cysteine 106, and cysteine 108 each contribute to the iron-sulfur cluster site.

Belongs to the HesB/IscA family. As to quaternary structure, homodimer. The cofactor is iron-sulfur cluster.

In terms of biological role, required for insertion of 4Fe-4S clusters for at least IspG. In Buchnera aphidicola subsp. Acyrthosiphon pisum (strain 5A), this protein is Iron-sulfur cluster insertion protein ErpA.